The primary structure comprises 143 residues: D-aminoacyl-tRNA deacylase (143 aa).

Positions 135–136 (GP) match the Gly-cisPro motif, important for rejection of L-amino acids motif.

Belongs to the DTD family. In terms of assembly, homodimer.

The protein localises to the cytoplasm. It catalyses the reaction glycyl-tRNA(Ala) + H2O = tRNA(Ala) + glycine + H(+). The enzyme catalyses a D-aminoacyl-tRNA + H2O = a tRNA + a D-alpha-amino acid + H(+). Its function is as follows. An aminoacyl-tRNA editing enzyme that deacylates mischarged D-aminoacyl-tRNAs. Also deacylates mischarged glycyl-tRNA(Ala), protecting cells against glycine mischarging by AlaRS. Acts via tRNA-based rather than protein-based catalysis; rejects L-amino acids rather than detecting D-amino acids in the active site. By recycling D-aminoacyl-tRNA to D-amino acids and free tRNA molecules, this enzyme counteracts the toxicity associated with the formation of D-aminoacyl-tRNA entities in vivo and helps enforce protein L-homochirality. This is D-aminoacyl-tRNA deacylase from Mycobacterium bovis (strain BCG / Pasteur 1173P2).